The sequence spans 212 residues: MRIGILGGTFDPIHYGHIRPAMEVKASLKLDKILLMPNHIPPHKNTTHSSTAQRLEMVAQVCEALTGFELCDIEAKRDSPSYTVVTLQQLSRLYPDDELFFIMGMDSFIHLQSWHKWLQLFELANIVVCQRPGWHLAEGHPMQHELSARHATLEALSHSSEPQHGRIFTVDISPQDISSTQIRSQLAMGEIPQDALLPVTLNYIQKQRLYFS.

This sequence belongs to the NadD family.

The catalysed reaction is nicotinate beta-D-ribonucleotide + ATP + H(+) = deamido-NAD(+) + diphosphate. It participates in cofactor biosynthesis; NAD(+) biosynthesis; deamido-NAD(+) from nicotinate D-ribonucleotide: step 1/1. In terms of biological role, catalyzes the reversible adenylation of nicotinate mononucleotide (NaMN) to nicotinic acid adenine dinucleotide (NaAD). This Shewanella sp. (strain ANA-3) protein is Probable nicotinate-nucleotide adenylyltransferase.